We begin with the raw amino-acid sequence, 332 residues long: Beta-hexosaminidase (332 aa).

Substrate contacts are provided by residues D62, R70, R131, and 161-162 (KH). The Proton donor/acceptor role is filled by H174. D244 acts as the Nucleophile in catalysis.

It belongs to the glycosyl hydrolase 3 family. NagZ subfamily.

It localises to the cytoplasm. The enzyme catalyses Hydrolysis of terminal non-reducing N-acetyl-D-hexosamine residues in N-acetyl-beta-D-hexosaminides.. The protein operates within cell wall biogenesis; peptidoglycan recycling. Plays a role in peptidoglycan recycling by cleaving the terminal beta-1,4-linked N-acetylglucosamine (GlcNAc) from peptide-linked peptidoglycan fragments, giving rise to free GlcNAc, anhydro-N-acetylmuramic acid and anhydro-N-acetylmuramic acid-linked peptides. The sequence is that of Beta-hexosaminidase from Pseudomonas aeruginosa (strain LESB58).